The following is a 145-amino-acid chain: Superoxide dismutase [Mn/Fe] (145 aa).

Positions 10 and 64 each coordinate Fe(3+). Mn(2+)-binding residues include H10 and H64. Positions 126–145 (TSTANQDTPISEGKKPILGL) are disordered.

This sequence belongs to the iron/manganese superoxide dismutase family. It depends on Mn(2+) as a cofactor. Fe(3+) is required as a cofactor.

It carries out the reaction 2 superoxide + 2 H(+) = H2O2 + O2. Destroys superoxide anion radicals which are normally produced within the cells and which are toxic to biological systems. Catalyzes the dismutation of superoxide anion radicals into O2 and H2O2 by successive reduction and oxidation of the transition metal ion at the active site. This Streptococcus oralis protein is Superoxide dismutase [Mn/Fe] (sodA).